A 318-amino-acid chain; its full sequence is Homoserine kinase (318 aa).

Position 97–107 (97–107 (PIGSGLGSSAC)) interacts with ATP.

This sequence belongs to the GHMP kinase family. Homoserine kinase subfamily.

It localises to the cytoplasm. It catalyses the reaction L-homoserine + ATP = O-phospho-L-homoserine + ADP + H(+). It functions in the pathway amino-acid biosynthesis; L-threonine biosynthesis; L-threonine from L-aspartate: step 4/5. Functionally, catalyzes the ATP-dependent phosphorylation of L-homoserine to L-homoserine phosphate. The protein is Homoserine kinase of Vibrio cholerae serotype O1 (strain ATCC 39541 / Classical Ogawa 395 / O395).